A 548-amino-acid polypeptide reads, in one-letter code: Glucose-6-phosphate isomerase (548 aa).

The active-site Proton donor is Glu-353. Active-site residues include His-384 and Lys-512.

This sequence belongs to the GPI family.

The protein localises to the cytoplasm. It catalyses the reaction alpha-D-glucose 6-phosphate = beta-D-fructose 6-phosphate. It participates in carbohydrate biosynthesis; gluconeogenesis. It functions in the pathway carbohydrate degradation; glycolysis; D-glyceraldehyde 3-phosphate and glycerone phosphate from D-glucose: step 2/4. Functionally, catalyzes the reversible isomerization of glucose-6-phosphate to fructose-6-phosphate. The sequence is that of Glucose-6-phosphate isomerase from Chlorobium chlorochromatii (strain CaD3).